Consider the following 208-residue polypeptide: Small ribosomal subunit protein uS4 (208 aa).

The S4 RNA-binding domain maps to 98–159; it reads LRLDNVVFRL…RSKKVVRITE (62 aa).

This sequence belongs to the universal ribosomal protein uS4 family. Part of the 30S ribosomal subunit. Contacts protein S5. The interaction surface between S4 and S5 is involved in control of translational fidelity.

Functionally, one of the primary rRNA binding proteins, it binds directly to 16S rRNA where it nucleates assembly of the body of the 30S subunit. Its function is as follows. With S5 and S12 plays an important role in translational accuracy. This chain is Small ribosomal subunit protein uS4, found in Anaeromyxobacter dehalogenans (strain 2CP-1 / ATCC BAA-258).